A 359-amino-acid chain; its full sequence is E3 ubiquitin-protein ligase RNF146 (359 aa).

An RING-type zinc finger spans residues 36-74 (CAICLQTCVHPVSLPCKHVFCYLCVKGASWLGKRCALCR). Glycyl lysine isopeptide (Lys-Gly) (interchain with G-Cter in ubiquitin) cross-links involve residues Lys84 and Lys94. The region spanning 91 to 167 (EELKAASRGN…EHGRRRKIKR (77 aa)) is the WWE domain. Positions 107, 110, and 114 each coordinate a glycoprotein. Residue Lys130 forms a Glycyl lysine isopeptide (Lys-Gly) (interchain with G-Cter in ubiquitin) linkage. A glycoprotein-binding residues include Tyr144, Gln153, Arg163, and Lys175. A Glycyl lysine isopeptide (Lys-Gly) (interchain with G-Cter in ubiquitin) cross-link involves residue Lys175. The interval 259–359 (ERSHRGEGEE…PDGQCTVTEV (101 aa)) is disordered. Residues 284 to 298 (SVEETESDASSDSED) are compositionally biased toward acidic residues. A phosphoserine mark is found at Ser290 and Ser294. Polar residues predominate over residues 306-322 (HSLTQQRLLVPNANQTV).

Can form homooligomers. Interacts with PARsylated AXIN1, AXIN2, BLZF1, CASC3, H1-2, IPO7, LIG3, NCL, PARP1, XRCC1, XRCC5 and XRCC6. Interacts with DDB1, DHX15, IQGAP1, LRPPRC, PARP2, PRKDC, RUVBL2, TNKS1 and TNKS2. Binding often leads to interactor ubiquitination, in the presence of the appropriate E1 and E2 enzymes, and proteasomal degradation. In terms of processing, ubiquitinated; autoubiquitinated. Autoubiquitination is enhanced upon poly(ADP-ribose)-binding.

Its subcellular location is the cytoplasm. The protein resides in the cytosol. The protein localises to the nucleus. It carries out the reaction S-ubiquitinyl-[E2 ubiquitin-conjugating enzyme]-L-cysteine + [acceptor protein]-L-lysine = [E2 ubiquitin-conjugating enzyme]-L-cysteine + N(6)-ubiquitinyl-[acceptor protein]-L-lysine.. It participates in protein modification; protein ubiquitination. E3 ubiquitin-protein ligase that specifically binds poly-ADP-ribosylated (PARsylated) proteins and mediates their ubiquitination and subsequent degradation. May regulate many important biological processes, such as cell survival and DNA damage response. Acts as an activator of the Wnt signaling pathway by mediating the ubiquitination of PARsylated AXIN1 and AXIN2, 2 key components of the beta-catenin destruction complex. Acts in cooperation with tankyrase proteins (TNKS and TNKS2), which mediate PARsylation of target proteins AXIN1, AXIN2, BLZF1, CASC3, TNKS and TNKS2. Recognizes and binds tankyrase-dependent PARsylated proteins via its WWE domain and mediates their ubiquitination, leading to their degradation. Different ubiquitin linkage types have been observed: TNKS2 undergoes ubiquitination at 'Lys-48' and 'Lys-63', while AXIN1 is only ubiquitinated at 'Lys-48'. May regulate TNKS and TNKS2 subcellular location, preventing aggregation at a centrosomal location. Neuroprotective protein. Protects the brain against N-methyl-D-aspartate (NMDA) receptor-mediated glutamate excitotoxicity and ischemia, by interfering with PAR-induced cell death, called parthanatos. Prevents nuclear translocation of AIFM1 in a PAR-binding dependent manner. Does not affect PARP1 activation. Protects against cell death induced by DNA damaging agents, such as N-methyl-N-nitro-N-nitrosoguanidine (MNNG) and rescues cells from G1 arrest. Promotes cell survival after gamma-irradiation. Facilitates DNA repair. This Ailuropoda melanoleuca (Giant panda) protein is E3 ubiquitin-protein ligase RNF146 (RNF146).